A 208-amino-acid polypeptide reads, in one-letter code: ATP-dependent Clp protease proteolytic subunit (208 aa).

Serine 105 (nucleophile) is an active-site residue. The active site involves histidine 130.

The protein belongs to the peptidase S14 family. Fourteen ClpP subunits assemble into 2 heptameric rings which stack back to back to give a disk-like structure with a central cavity, resembling the structure of eukaryotic proteasomes.

Its subcellular location is the cytoplasm. The enzyme catalyses Hydrolysis of proteins to small peptides in the presence of ATP and magnesium. alpha-casein is the usual test substrate. In the absence of ATP, only oligopeptides shorter than five residues are hydrolyzed (such as succinyl-Leu-Tyr-|-NHMec, and Leu-Tyr-Leu-|-Tyr-Trp, in which cleavage of the -Tyr-|-Leu- and -Tyr-|-Trp bonds also occurs).. In terms of biological role, cleaves peptides in various proteins in a process that requires ATP hydrolysis. Has a chymotrypsin-like activity. Plays a major role in the degradation of misfolded proteins. This chain is ATP-dependent Clp protease proteolytic subunit, found in Xylella fastidiosa (strain 9a5c).